The sequence spans 495 residues: Lysine--tRNA ligase (495 aa).

Mg(2+) is bound by residues Glu-406 and Glu-413.

Belongs to the class-II aminoacyl-tRNA synthetase family. In terms of assembly, homodimer. The cofactor is Mg(2+).

It is found in the cytoplasm. It catalyses the reaction tRNA(Lys) + L-lysine + ATP = L-lysyl-tRNA(Lys) + AMP + diphosphate. This Leuconostoc mesenteroides subsp. mesenteroides (strain ATCC 8293 / DSM 20343 / BCRC 11652 / CCM 1803 / JCM 6124 / NCDO 523 / NBRC 100496 / NCIMB 8023 / NCTC 12954 / NRRL B-1118 / 37Y) protein is Lysine--tRNA ligase.